A 1050-amino-acid chain; its full sequence is Zinc finger and BTB domain-containing protein 11 (1050 aa).

The span at 143 to 156 (LDSGEESNESEDDL) shows a compositional bias: acidic residues. Positions 143 to 173 (LDSGEESNESEDDLSNFTSPPSTASKSSKKK) are disordered. Residues 157 to 168 (SNFTSPPSTASK) show a composition bias toward low complexity. A BTB domain is found at 214 to 282 (CDVTLLIEGE…AYTSVLSFDF (69 aa)). 2 disordered regions span residues 373 to 514 (AEQN…EGGY) and 543 to 563 (LVQRGKKMKQPKRDAKESTEE). Residues 378 to 399 (EPEQQPAPQASPEAEASVSPVE) show a composition bias toward low complexity. Basic and acidic residues-rich tracts occupy residues 478–501 (SKDEDTLTEATEKTDSGPDDDTYR) and 553–563 (PKRDAKESTEE). 2 consecutive C2H2-type zinc fingers follow at residues 566-588 (HKCGECGMVFPRRYAFIMHTLKH) and 594-616 (YKCPLCKKQFQYSASLRAHLIRH). The segment at 617–641 (TRKEAPTSSSSNSTSTEASGGSSEK) is disordered. The segment covering 623–638 (TSSSSNSTSTEASGGS) has biased composition (low complexity). 10 consecutive C2H2-type zinc fingers follow at residues 648–670 (FICSICGRTLPKLYSLRIHMLKH), 676–698 (HACQVCGKTFIYKHGLKLHQSLH), 704–726 (FQCELCVKSFVTKRSLQEHMSIH), 732–754 (YFCSICGKSFHRGSGLSKHLKKH), 763–785 (YHCTQCEKSFFEARDLRQHMNKH), 791–813 (FQCQFCDKCYSWKKDWYSHVKSH), 819–843 (YRCNICGKEFYEKALFRRHVKKATH), 855–877 (RVCDQCGRKFTQLREYRRHMNNH), 883–905 (FECLTCGVAWADARSLKRHVRTH), and 911–934 (YVCPVCSEAYIDARTLRKHMTKFH).

It is found in the nucleus. It localises to the nucleolus. Its function is as follows. May be involved in transcriptional regulation. The protein is Zinc finger and BTB domain-containing protein 11 of Mus musculus (Mouse).